Here is a 696-residue protein sequence, read N- to C-terminus: Polyribonucleotide nucleotidyltransferase (696 aa).

Mg(2+)-binding residues include Asp-483 and Asp-489. In terms of domain architecture, KH spans 550 to 609 (PRITTIYVKTDKIRDVIGSGGKNIRGITEATGVTIDIDDTGKINIASTDKAACDMAIKMI). The region spanning 619 to 687 (GKLYMGLVKK…KQGKIKLSRK (69 aa)) is the S1 motif domain.

This sequence belongs to the polyribonucleotide nucleotidyltransferase family. Requires Mg(2+) as cofactor.

It is found in the cytoplasm. The catalysed reaction is RNA(n+1) + phosphate = RNA(n) + a ribonucleoside 5'-diphosphate. Involved in mRNA degradation. Catalyzes the phosphorolysis of single-stranded polyribonucleotides processively in the 3'- to 5'-direction. The polypeptide is Polyribonucleotide nucleotidyltransferase (Geotalea daltonii (strain DSM 22248 / JCM 15807 / FRC-32) (Geobacter daltonii)).